Reading from the N-terminus, the 324-residue chain is Lipoyl synthase (324 aa).

Positions 65, 70, 76, 91, 95, 98, and 302 each coordinate [4Fe-4S] cluster. The 215-residue stretch at 77-291 folds into the Radical SAM core domain; the sequence is WEDREATFLI…AQYAEGLGFA (215 aa).

It belongs to the radical SAM superfamily. Lipoyl synthase family. The cofactor is [4Fe-4S] cluster.

It is found in the cytoplasm. The catalysed reaction is [[Fe-S] cluster scaffold protein carrying a second [4Fe-4S](2+) cluster] + N(6)-octanoyl-L-lysyl-[protein] + 2 oxidized [2Fe-2S]-[ferredoxin] + 2 S-adenosyl-L-methionine + 4 H(+) = [[Fe-S] cluster scaffold protein] + N(6)-[(R)-dihydrolipoyl]-L-lysyl-[protein] + 4 Fe(3+) + 2 hydrogen sulfide + 2 5'-deoxyadenosine + 2 L-methionine + 2 reduced [2Fe-2S]-[ferredoxin]. It functions in the pathway protein modification; protein lipoylation via endogenous pathway; protein N(6)-(lipoyl)lysine from octanoyl-[acyl-carrier-protein]: step 2/2. Its function is as follows. Catalyzes the radical-mediated insertion of two sulfur atoms into the C-6 and C-8 positions of the octanoyl moiety bound to the lipoyl domains of lipoate-dependent enzymes, thereby converting the octanoylated domains into lipoylated derivatives. The protein is Lipoyl synthase of Mycobacterium ulcerans (strain Agy99).